The primary structure comprises 458 residues: UDP-N-acetylmuramate--L-alanine ligase (458 aa).

112 to 118 (GTHGKTT) provides a ligand contact to ATP.

The protein belongs to the MurCDEF family.

Its subcellular location is the cytoplasm. The enzyme catalyses UDP-N-acetyl-alpha-D-muramate + L-alanine + ATP = UDP-N-acetyl-alpha-D-muramoyl-L-alanine + ADP + phosphate + H(+). Its pathway is cell wall biogenesis; peptidoglycan biosynthesis. In terms of biological role, cell wall formation. In Geotalea uraniireducens (strain Rf4) (Geobacter uraniireducens), this protein is UDP-N-acetylmuramate--L-alanine ligase.